A 412-amino-acid chain; its full sequence is Serine hydroxymethyltransferase (412 aa).

Residues L116 and 120–122 (GHL) contribute to the (6S)-5,6,7,8-tetrahydrofolate site. K225 is subject to N6-(pyridoxal phosphate)lysine. Residues E241 and 350-352 (SPF) contribute to the (6S)-5,6,7,8-tetrahydrofolate site.

It belongs to the SHMT family. In terms of assembly, homodimer. Requires pyridoxal 5'-phosphate as cofactor.

Its subcellular location is the cytoplasm. It catalyses the reaction (6R)-5,10-methylene-5,6,7,8-tetrahydrofolate + glycine + H2O = (6S)-5,6,7,8-tetrahydrofolate + L-serine. It participates in one-carbon metabolism; tetrahydrofolate interconversion. Its pathway is amino-acid biosynthesis; glycine biosynthesis; glycine from L-serine: step 1/1. Catalyzes the reversible interconversion of serine and glycine with tetrahydrofolate (THF) serving as the one-carbon carrier. This reaction serves as the major source of one-carbon groups required for the biosynthesis of purines, thymidylate, methionine, and other important biomolecules. Also exhibits THF-independent aldolase activity toward beta-hydroxyamino acids, producing glycine and aldehydes, via a retro-aldol mechanism. This is Serine hydroxymethyltransferase from Enterococcus faecalis (strain ATCC 700802 / V583).